We begin with the raw amino-acid sequence, 452 residues long: Pup--protein ligase (452 aa).

Glutamate 9 provides a ligand contact to Mg(2+). Arginine 53 provides a ligand contact to ATP. Tyrosine 55 contacts Mg(2+). The active-site Proton acceptor is the aspartate 57. Position 63 (glutamate 63) interacts with Mg(2+). ATP contacts are provided by threonine 66 and tryptophan 419.

The protein belongs to the Pup ligase/Pup deamidase family. Pup-conjugating enzyme subfamily.

It catalyses the reaction ATP + [prokaryotic ubiquitin-like protein]-L-glutamate + [protein]-L-lysine = ADP + phosphate + N(6)-([prokaryotic ubiquitin-like protein]-gamma-L-glutamyl)-[protein]-L-lysine.. It functions in the pathway protein degradation; proteasomal Pup-dependent pathway. The protein operates within protein modification; protein pupylation. Functionally, catalyzes the covalent attachment of the prokaryotic ubiquitin-like protein modifier Pup to the proteasomal substrate proteins, thereby targeting them for proteasomal degradation. This tagging system is termed pupylation. The ligation reaction involves the side-chain carboxylate of the C-terminal glutamate of Pup and the side-chain amino group of a substrate lysine. This Mycobacterium tuberculosis (strain KZN 1435 / MDR) protein is Pup--protein ligase.